A 471-amino-acid polypeptide reads, in one-letter code: Eukaryotic translation initiation factor 3 subunit L (471 aa).

The region spanning 252 to 446 (DAIRMFSHIL…DLDYAMQGDL (195 aa)) is the PCI domain.

The protein belongs to the eIF-3 subunit L family.

The protein localises to the cytoplasm. Functionally, component of the eukaryotic translation initiation factor 3 (eIF-3) complex, which is involved in protein synthesis of a specialized repertoire of mRNAs and, together with other initiation factors, stimulates binding of mRNA and methionyl-tRNAi to the 40S ribosome. The eIF-3 complex specifically targets and initiates translation of a subset of mRNAs involved in cell proliferation. The protein is Eukaryotic translation initiation factor 3 subunit L of Pyricularia oryzae (strain Y34) (Rice blast fungus).